Consider the following 1818-residue polypeptide: Integrin beta-4 (1818 aa).

The signal sequence occupies residues 1–28; that stretch reads MAGPCCSPWVKLLLLAAMLSASLPGDLA. Over 29–712 the chain is Extracellular; sequence NRCKKAQVKS…HKKKDCPPGS (684 aa). The region spanning 30 to 74 is the PSI domain; sequence RCKKAQVKSCTECIRVDKSCAYCTDELFKERRCNTQAELLAAGCR. 8 disulfide bridges follow: Cys31–Cys49, Cys39–Cys457, Cys42–Cys62, Cys52–Cys73, Cys246–Cys289, Cys459–Cys478, Cys470–Cys481, and Cys483–Cys492. Residues 132–310 form the VWFA domain; that stretch reads DLYILMDFSN…KTQDYPSVPT (179 aa). Mg(2+)-binding residues include Ser140 and Ser142. Ca(2+) contacts are provided by Ser142, Asp145, Asp146, and Asp177. The interval 195-200 is involved in NRG1- and IGF1-binding; the sequence is WPNSDP. The Ca(2+) site is built by Asn229, Asp231, Pro233, and Glu234. Glu234 is a Mg(2+) binding site. Asn328 is a glycosylation site (N-linked (GlcNAc...) asparagine). A Ca(2+)-binding site is contributed by Glu351. I-EGF domains lie at 459–493, 494–539, 540–576, and 577–617; these read CELQ…KTCN, CSTG…HFCE, YDNF…RSCD, and CPLS…TTCE. The short motif at 473-475 is the Cell attachment site element; that stretch reads RGD. Asn493 is a glycosylation site (N-linked (GlcNAc...) asparagine). Disulfide bonds link Cys494–Cys522, Cys505–Cys520, Cys514–Cys525, Cys527–Cys538, Cys545–Cys559, Cys553–Cys564, Cys566–Cys575, Cys577–Cys600, Cys584–Cys598, Cys592–Cys603, and Cys605–Cys616. N-linked (GlcNAc...) asparagine glycosylation is present at Asn581. N-linked (GlcNAc...) asparagine glycosylation is present at Asn619. 4 cysteine pairs are disulfide-bonded: Cys628–Cys673, Cys634–Cys653, Cys637–Cys650, and Cys682–Cys708. Asn697 carries N-linked (GlcNAc...) asparagine glycosylation. Residues 713–733 form a helical membrane-spanning segment; that stretch reads FWWLIPLLIFLLLLLALLLLL. The palmitoylated on several cysteines stretch occupies residues 734 to 751; it reads CWKYCACCKACLGLLPCC. Residues 734-1818 lie on the Cytoplasmic side of the membrane; sequence CWKYCACCKA…THMDQQFFQT (1085 aa). Phosphoserine is present on Ser773. One can recognise a Calx-beta domain in the interval 981 to 1086; sequence VNITIIKEQA…QVRRFQVQLS (106 aa). Positions 1005–1007 match the Cell attachment site motif; the sequence is RGD. Ser1071 and Ser1121 each carry phosphoserine. A disordered region spans residues 1115-1137; the sequence is INQTLSSPPPPHGDLGAPQNPNA. 2 Fibronectin type-III domains span residues 1131–1220 and 1224–1323; these read APQN…THQE and EPGR…TQPK. Residues 1402–1433 are disordered; the sequence is LSASSGRSDEDGSVAGGVEGEGSGWIRGATPR. Over residues 1415-1426 the composition is skewed to gly residues; the sequence is VAGGVEGEGSGW. Phosphoserine occurs at positions 1451, 1454, and 1470. A Phosphothreonine modification is found at Thr1483. Ser1490 is modified (phosphoserine). Phosphothreonine is present on Thr1526. 2 Fibronectin type-III domains span residues 1526-1621 and 1639-1735; these read TPTR…VHPQ and APGP…SQVG. Ser1787 carries the phosphoserine modification.

Belongs to the integrin beta chain family. In terms of assembly, heterodimer of an alpha and a beta subunit. Beta-4 associates with alpha-6. Interacts (via cytoplasmic region) with COL17A1 (via cytoplasmic region). Interacts (via cytoplasmic region) with DST isoform 3 (via N-terminus). Interacts (via cytoplasmic domain) with DST (via N-terminus). Interacts with RAC1. ITGA6:ITGB4 is found in a ternary complex with NRG1 and ERBB3. ITGA6:ITGB4 is found in a ternary complex with IGF1 and IGF1R. ITGA6:ITGB4 interacts with IGF2. Interacts with TMEM268; this interaction prevents ITGB4 degradation. Post-translationally, palmitoylated by DHHC3 at several cysteines of the membrane-proximal region, enhancing stability and cell surface expression. Palmitoylation also promotes secondary association with tertaspanins.

The protein localises to the cell membrane. Its subcellular location is the cell junction. It localises to the hemidesmosome. Integrin alpha-6/beta-4 is a receptor for laminin. It plays a critical structural role in the hemidesmosome of epithelial cells. Is required for the regulation of keratinocyte polarity and motility. ITGA6:ITGB4 binds to NRG1 (via EGF domain) and this binding is essential for NRG1-ERBB signaling. ITGA6:ITGB4 binds to IGF1 and this binding is essential for IGF1 signaling. ITGA6:ITGB4 binds to IGF2 and this binding is essential for IGF2 signaling. The polypeptide is Integrin beta-4 (Itgb4) (Mus musculus (Mouse)).